Here is an 852-residue protein sequence, read N- to C-terminus: Lon protease homolog 2, peroxisomal (852 aa).

An N-acetylserine modification is found at Ser-2. The Lon N-terminal domain occupies 13–222 (LPLLLTHEGV…MTIPLLVRQI (210 aa)). Residue 375 to 382 (GPPGVGKT) participates in ATP binding. One can recognise a Lon proteolytic domain in the interval 651 to 837 (LSQPGVAIGL…DEVLNAAFDG (187 aa)). Catalysis depends on residues Ser-743 and Lys-786. A Microbody targeting signal motif is present at residues 850–852 (SKL).

This sequence belongs to the peptidase S16 family. In terms of assembly, interacts with PEX5. Interacts with TYSND1. May interact with enzymes involved in beta-oxidation of fatty acids, including ACOX1/AOX.

It localises to the peroxisome matrix. It carries out the reaction Hydrolysis of proteins in presence of ATP.. In terms of biological role, ATP-dependent serine protease that mediates the selective degradation of misfolded and unassembled polypeptides in the peroxisomal matrix. Necessary for type 2 peroxisome targeting signal (PTS2)-containing protein processing and facilitates peroxisome matrix protein import. May indirectly regulate peroxisomal fatty acid beta-oxidation through degradation of the self-processed forms of TYSND1. This Bos taurus (Bovine) protein is Lon protease homolog 2, peroxisomal.